The following is an 889-amino-acid chain: Envelope glycoprotein gp160 (889 aa).

The N-terminal stretch at 1–22 (MGCLGNQLLIALLLLSASGIYC) is a signal peptide. Residues 23–704 (VQYVTVFYGI…TSWIKYIQYG (682 aa)) lie on the Extracellular side of the membrane. A glycan (N-linked (GlcNAc...) asparagine; by host) is linked at Asn37. Cys44 and Cys57 are oxidised to a cystine. N-linked (GlcNAc...) asparagine; by host glycans are attached at residues Asn70 and Asn114. 5 cysteine pairs are disulfide-bonded: Cys101-Cys226, Cys108-Cys217, Cys113-Cys175, Cys239-Cys269, and Cys249-Cys261. Residues 113–174 (CNKSETDRWG…TGLEQEPMVS (62 aa)) form a V1 region. A disordered region spans residues 120–145 (RWGLTGTPAPTTTQTTTTQASTTPTS). The segment covering 126-145 (TPAPTTTQTTTTQASTTPTS) has biased composition (low complexity). Asn153, Asn163, Asn178, Asn191, Asn206, Asn218, Asn250, Asn253, Asn260, Asn284, Asn290, Asn301, Asn312, Asn322, Asn377, Asn422, Asn470, Asn486, and Asn489 each carry an N-linked (GlcNAc...) asparagine; by host glycan. The segment at 175-217 (CKFNMTGLKRDKKREYNETWYSRDLVCEQNSNETDSKCYMNHC) is V2. A V3 region spans residues 317-349 (CRRPGNKTVLPVTIMSGLVFHSQPINERPKQAW). A disulfide bond links Cys317 and Cys350. 2 disulfides stabilise this stretch: Cys401-Cys469 and Cys408-Cys442. The tract at residues 408 to 442 (CKMNWFLNWVENIQNGSRWTSQNQKERQRRNYVPC) is V4. Positions 485–492 (GNETNITM) are V5. The interval 536-556 (GVFVLGFLGFLATAGSAMSAA) is fusion peptide. Residues 599–615 (LQTRVTAIEKYLKDQAQ) form an immunosuppression region. 3 N-linked (GlcNAc...) asparagine; by host glycosylation sites follow: Asn635, Asn644, and Asn660. Residues 648 to 675 (QEWEKQVNFLEANITQSLEEAQIQQEKN) adopt a coiled-coil conformation. An MPER; binding to GalCer region spans residues 681 to 702 (KLNSWDIFGNWFDLTSWIKYIQ). A helical membrane pass occupies residues 705–725 (VLIVLGVIGLRIVIYVVQMLA). The Cytoplasmic portion of the chain corresponds to 726–889 (RLRQGYRPVF…IRQGLELTLL (164 aa)). The YXXV motif; contains endocytosis signal signature appears at 731–734 (YRPV). A lipid anchor (S-palmitoyl cysteine; by host) is attached at Cys797. The Di-leucine internalization motif motif lies at 888–889 (LL).

As to quaternary structure, the mature envelope protein (Env) consists of a homotrimer of non-covalently associated gp120-gp41 heterodimers. The resulting complex protrudes from the virus surface as a spike. Interacts with host CD4 and CCR5. Gp120 also interacts with the C-type lectins CD209/DC-SIGN and CLEC4M/DC-SIGNR (collectively referred to as DC-SIGN(R)). The mature envelope protein (Env) consists of a homotrimer of non-covalently associated gp120-gp41 heterodimers. The resulting complex protrudes from the virus surface as a spike. In terms of processing, specific enzymatic cleavages in vivo yield mature proteins. Envelope glycoproteins are synthesized as an inactive precursor that is heavily N-glycosylated and processed likely by host cell furin in the Golgi to yield the mature SU and TM proteins. The cleavage site between SU and TM requires the minimal sequence [KR]-X-[KR]-R. Post-translationally, palmitoylation of the transmembrane protein and of Env polyprotein (prior to its proteolytic cleavage) is essential for their association with host cell membrane lipid rafts. Palmitoylation is therefore required for envelope trafficking to classical lipid rafts, but not for viral replication.

Its subcellular location is the virion membrane. It localises to the host cell membrane. The protein resides in the host endosome membrane. In terms of biological role, the surface protein gp120 (SU) attaches the virus to the host lymphoid cell by binding to the primary receptor CD4. This interaction induces a structural rearrangement creating a high affinity binding site for a chemokine coreceptor like CCR5. This peculiar 2 stage receptor-interaction strategy allows gp120 to maintain the highly conserved coreceptor-binding site in a cryptic conformation, protected from neutralizing antibodies. These changes are transmitted to the transmembrane protein gp41 and are thought to activate its fusogenic potential by unmasking its fusion peptide. Its function is as follows. Surface protein gp120 (SU) may target the virus to gut-associated lymphoid tissue (GALT) by binding host ITGA4/ITGB7 (alpha-4/beta-7 integrins), a complex that mediates T-cell migration to the GALT. Interaction between gp120 and ITGA4/ITGB7 would allow the virus to enter GALT early in the infection, infecting and killing most of GALT's resting CD4+ T-cells. This T-cell depletion is believed to be the major insult to the host immune system leading to AIDS. The surface protein gp120 is a ligand for CD209/DC-SIGN and CLEC4M/DC-SIGNR, which are respectively found on dendritic cells (DCs), and on endothelial cells of liver sinusoids and lymph node sinuses. These interactions allow capture of viral particles at mucosal surfaces by these cells and subsequent transmission to permissive cells. DCs are professional antigen presenting cells, critical for host immunity by inducing specific immune responses against a broad variety of pathogens. They act as sentinels in various tissues where they take up antigen, process it, and present it to T-cells following migration to lymphoid organs. SIV subverts the migration properties of dendritic cells to gain access to CD4+ T-cells in lymph nodes. Virus transmission to permissive T-cells occurs either in trans (without DCs infection, through viral capture and transmission), or in cis (following DCs productive infection, through the usual CD4-gp120 interaction), thereby inducing a robust infection. In trans infection, bound virions remain infectious over days and it is proposed that they are not degraded, but protected in non-lysosomal acidic organelles within the DCs close to the cell membrane thus contributing to the viral infectious potential during DCs' migration from the periphery to the lymphoid tissues. On arrival at lymphoid tissues, intact virions recycle back to DCs' cell surface allowing virus transmission to CD4+ T-cells. Virion capture also seems to lead to MHC-II-restricted viral antigen presentation, and probably to the activation of SIV-specific CD4+ cells. Functionally, the transmembrane protein gp41 (TM) acts as a class I viral fusion protein. Under the current model, the protein has at least 3 conformational states: pre-fusion native state, pre-hairpin intermediate state, and post-fusion hairpin state. During fusion of viral and target intracellular membranes, the coiled coil regions (heptad repeats) assume a trimer-of-hairpins structure, positioning the fusion peptide in close proximity to the C-terminal region of the ectodomain. The formation of this structure appears to drive apposition and subsequent fusion of viral and target cell membranes. Complete fusion occurs in host cell endosomes. The virus undergoes clathrin-dependent internalization long before endosomal fusion, thus minimizing the surface exposure of conserved viral epitopes during fusion and reducing the efficacy of inhibitors targeting these epitopes. Membranes fusion leads to delivery of the nucleocapsid into the cytoplasm. In terms of biological role, the envelope glycoprotein gp160 precursor down-modulates cell surface CD4 antigen by interacting with it in the endoplasmic reticulum and blocking its transport to the cell surface. Its function is as follows. The gp120-gp41 heterodimer allows rapid transcytosis of the virus through CD4 negative cells such as simple epithelial monolayers of the intestinal, rectal and endocervical epithelial barriers. Both gp120 and gp41 specifically recognize glycosphingolipids galactosyl-ceramide (GalCer) or 3' sulfo-galactosyl-ceramide (GalS) present in the lipid rafts structures of epithelial cells. Binding to these alternative receptors allows the rapid transcytosis of the virus through the epithelial cells. This transcytotic vesicle-mediated transport of virions from the apical side to the basolateral side of the epithelial cells does not involve infection of the cells themselves. The protein is Envelope glycoprotein gp160 (env) of Simian immunodeficiency virus (isolate PBj14/BCL-3) (SIV-sm).